Here is a 184-residue protein sequence, read N- to C-terminus: Endoribonuclease YbeY (184 aa).

2 stretches are compositionally biased toward acidic residues: residues 1–11 (MTVEVGADENP) and 19–29 (DGAGDESDDED). The segment at 1 to 38 (MTVEVGADENPDFAHDETDGAGDESDDEDAQGRDPELD) is disordered. H146, H150, and H156 together coordinate Zn(2+).

Belongs to the endoribonuclease YbeY family. Zn(2+) is required as a cofactor.

It localises to the cytoplasm. Single strand-specific metallo-endoribonuclease involved in late-stage 70S ribosome quality control and in maturation of the 3' terminus of the 16S rRNA. In Burkholderia pseudomallei (strain K96243), this protein is Endoribonuclease YbeY.